Reading from the N-terminus, the 132-residue chain is Small ribosomal subunit protein uS8 (132 aa).

It belongs to the universal ribosomal protein uS8 family. As to quaternary structure, part of the 30S ribosomal subunit. Contacts proteins S5 and S12.

Functionally, one of the primary rRNA binding proteins, it binds directly to 16S rRNA central domain where it helps coordinate assembly of the platform of the 30S subunit. This chain is Small ribosomal subunit protein uS8, found in Halothermothrix orenii (strain H 168 / OCM 544 / DSM 9562).